The following is a 554-amino-acid chain: Formate--tetrahydrofolate ligase (554 aa).

63-70 (TPAGEGKT) serves as a coordination point for ATP.

This sequence belongs to the formate--tetrahydrofolate ligase family.

The enzyme catalyses (6S)-5,6,7,8-tetrahydrofolate + formate + ATP = (6R)-10-formyltetrahydrofolate + ADP + phosphate. The protein operates within one-carbon metabolism; tetrahydrofolate interconversion. In Halothermothrix orenii (strain H 168 / OCM 544 / DSM 9562), this protein is Formate--tetrahydrofolate ligase.